A 342-amino-acid polypeptide reads, in one-letter code: HPr kinase/phosphorylase (342 aa).

Residues H153 and K174 contribute to the active site. 168 to 175 (GKSGLGKS) contacts ATP. Mg(2+) is bound at residue S175. Residue D192 is the Proton acceptor; for phosphorylation activity. Proton donor; for dephosphorylation activity of the active site. Residues 217-226 (MEIRGLGVVD) form an important for the catalytic mechanism of both phosphorylation and dephosphorylation region. E218 contacts Mg(2+). Residue R259 is part of the active site. An important for the catalytic mechanism of dephosphorylation region spans residues 280–285 (PIFPGK).

It belongs to the HPrK/P family. In terms of assembly, homohexamer. Requires Mg(2+) as cofactor.

It catalyses the reaction [HPr protein]-L-serine + ATP = [HPr protein]-O-phospho-L-serine + ADP + H(+). The enzyme catalyses [HPr protein]-O-phospho-L-serine + phosphate + H(+) = [HPr protein]-L-serine + diphosphate. Its function is as follows. Catalyzes the ATP- as well as the pyrophosphate-dependent phosphorylation of a specific serine residue in HPr, a phosphocarrier protein of the phosphoenolpyruvate-dependent sugar phosphotransferase system (PTS). HprK/P also catalyzes the pyrophosphate-producing, inorganic phosphate-dependent dephosphorylation (phosphorolysis) of seryl-phosphorylated HPr (P-Ser-HPr). In Chlorobaculum tepidum (strain ATCC 49652 / DSM 12025 / NBRC 103806 / TLS) (Chlorobium tepidum), this protein is HPr kinase/phosphorylase.